The chain runs to 616 residues: Dihydroxy-acid dehydratase (616 aa).

Position 81 (D81) interacts with Mg(2+). [2Fe-2S] cluster is bound at residue C122. The Mg(2+) site is built by D123 and K124. N6-carboxylysine is present on K124. C195 contributes to the [2Fe-2S] cluster binding site. Residue E491 coordinates Mg(2+). S517 functions as the Proton acceptor in the catalytic mechanism.

The protein belongs to the IlvD/Edd family. Homodimer. The cofactor is [2Fe-2S] cluster. Requires Mg(2+) as cofactor.

It carries out the reaction (2R)-2,3-dihydroxy-3-methylbutanoate = 3-methyl-2-oxobutanoate + H2O. It catalyses the reaction (2R,3R)-2,3-dihydroxy-3-methylpentanoate = (S)-3-methyl-2-oxopentanoate + H2O. Its pathway is amino-acid biosynthesis; L-isoleucine biosynthesis; L-isoleucine from 2-oxobutanoate: step 3/4. It participates in amino-acid biosynthesis; L-valine biosynthesis; L-valine from pyruvate: step 3/4. Its function is as follows. Functions in the biosynthesis of branched-chain amino acids. Catalyzes the dehydration of (2R,3R)-2,3-dihydroxy-3-methylpentanoate (2,3-dihydroxy-3-methylvalerate) into 2-oxo-3-methylpentanoate (2-oxo-3-methylvalerate) and of (2R)-2,3-dihydroxy-3-methylbutanoate (2,3-dihydroxyisovalerate) into 2-oxo-3-methylbutanoate (2-oxoisovalerate), the penultimate precursor to L-isoleucine and L-valine, respectively. This chain is Dihydroxy-acid dehydratase, found in Salmonella agona (strain SL483).